Reading from the N-terminus, the 132-residue chain is Holo-[acyl-carrier-protein] synthase (132 aa).

Mg(2+) contacts are provided by Asp-8 and Glu-62.

Belongs to the P-Pant transferase superfamily. AcpS family. The cofactor is Mg(2+).

The protein localises to the cytoplasm. It carries out the reaction apo-[ACP] + CoA = holo-[ACP] + adenosine 3',5'-bisphosphate + H(+). Transfers the 4'-phosphopantetheine moiety from coenzyme A to a Ser of acyl-carrier-protein. The chain is Holo-[acyl-carrier-protein] synthase from Methylibium petroleiphilum (strain ATCC BAA-1232 / LMG 22953 / PM1).